Consider the following 277-residue polypeptide: Phosphatidylglycerol--prolipoprotein diacylglyceryl transferase (277 aa).

The next 3 helical transmembrane spans lie at 16–36 (FFQIHWYGLTYLAAFGLFYFL), 62–82 (LLFFGVVGVILGGRLGYVLFY), and 101–121 (GMAFHGGLLGVIVAMALFAHL). Position 145 (Arg-145) interacts with a 1,2-diacyl-sn-glycero-3-phospho-(1'-sn-glycerol). A run of 2 helical transmembrane segments spans residues 214–234 (PIWGRVSGLFVGGYGVFRFIA) and 243–263 (FLGLLAFNLSMGQWLCVPMIV).

It belongs to the Lgt family.

It is found in the cell inner membrane. The enzyme catalyses L-cysteinyl-[prolipoprotein] + a 1,2-diacyl-sn-glycero-3-phospho-(1'-sn-glycerol) = an S-1,2-diacyl-sn-glyceryl-L-cysteinyl-[prolipoprotein] + sn-glycerol 1-phosphate + H(+). The protein operates within protein modification; lipoprotein biosynthesis (diacylglyceryl transfer). In terms of biological role, catalyzes the transfer of the diacylglyceryl group from phosphatidylglycerol to the sulfhydryl group of the N-terminal cysteine of a prolipoprotein, the first step in the formation of mature lipoproteins. In Leptothrix cholodnii (strain ATCC 51168 / LMG 8142 / SP-6) (Leptothrix discophora (strain SP-6)), this protein is Phosphatidylglycerol--prolipoprotein diacylglyceryl transferase.